The following is a 354-amino-acid chain: MREILEDICCSEVRVVVGEGSLSKLSKIKDNNAAVIYSRKISIADKINKYLPNAYFIPINDGESTKELSSVISLVEKLFEKNFDRGDYIIGVGGGTVTDVAGFLASIYLRGLNLINVPTTFLGMVDAAIGGKNGVNFNNIKNLIGTFYQPSMIISDLEFLETLPIEELKKGLAEVIKYGLTLDKELYDYLSLNKEKILNKDKQALEDIIFRSTLDKLSIVKEDERETKGIRIVLNFGHTIGHAIEAGSSFNVPHGYAISVGMVCEAKMAEELGYAEEGVVEDVLWLLQIYGLPYDISQIDAPVDLKLALNAINMDKKHRKDVILIPFPTRIGSWKKVEVPLDTVKGFAEQCLKK.

Residues 61–66 (DGESTK), 119–120 (TT), lysine 132, lysine 141, and 159–162 (FLET) contribute to the NAD(+) site. Residues glutamate 174, histidine 238, and histidine 254 each coordinate Zn(2+).

The protein belongs to the sugar phosphate cyclases superfamily. Dehydroquinate synthase family. NAD(+) is required as a cofactor. Co(2+) serves as cofactor. The cofactor is Zn(2+).

Its subcellular location is the cytoplasm. It carries out the reaction 7-phospho-2-dehydro-3-deoxy-D-arabino-heptonate = 3-dehydroquinate + phosphate. Its pathway is metabolic intermediate biosynthesis; chorismate biosynthesis; chorismate from D-erythrose 4-phosphate and phosphoenolpyruvate: step 2/7. Catalyzes the conversion of 3-deoxy-D-arabino-heptulosonate 7-phosphate (DAHP) to dehydroquinate (DHQ). This Saccharolobus solfataricus (strain ATCC 35092 / DSM 1617 / JCM 11322 / P2) (Sulfolobus solfataricus) protein is 3-dehydroquinate synthase.